Reading from the N-terminus, the 496-residue chain is Probable cytosol aminopeptidase (496 aa).

The Mn(2+) site is built by Lys257 and Asp262. The active site involves Lys269. Positions 281, 341, and 343 each coordinate Mn(2+). Residue Arg345 is part of the active site.

The protein belongs to the peptidase M17 family. It depends on Mn(2+) as a cofactor.

Its subcellular location is the cytoplasm. The catalysed reaction is Release of an N-terminal amino acid, Xaa-|-Yaa-, in which Xaa is preferably Leu, but may be other amino acids including Pro although not Arg or Lys, and Yaa may be Pro. Amino acid amides and methyl esters are also readily hydrolyzed, but rates on arylamides are exceedingly low.. The enzyme catalyses Release of an N-terminal amino acid, preferentially leucine, but not glutamic or aspartic acids.. Functionally, presumably involved in the processing and regular turnover of intracellular proteins. Catalyzes the removal of unsubstituted N-terminal amino acids from various peptides. The chain is Probable cytosol aminopeptidase from Prochlorococcus marinus (strain SARG / CCMP1375 / SS120).